A 371-amino-acid chain; its full sequence is Putative RNA-binding protein Luc7-like 1 (371 aa).

2 coiled-coil regions span residues 87-177 (MDHL…RNSM) and 218-259 (FIQI…LSRR). Positions 232 to 257 (VAEKQEKRNQDRLRRREEREREERLS) are enriched in basic and acidic residues. Positions 232 to 371 (VAEKQEKRNQ…RSEEKEAGEI (140 aa)) are disordered. Positions 258 to 317 (RRSGSRTRDRRRSRSRDRRRRRSRSTSRERRKLSRSRSRDRHRRHRSRSRSHSRGHRRAS) are enriched in basic residues. Composition is skewed to basic and acidic residues over residues 318-351 (RDRS…DWRL) and 361-371 (RRSEEKEAGEI). Ser332, Ser336, and Ser363 each carry phosphoserine.

This sequence belongs to the Luc7 family. Ubiquitous.

Its function is as follows. May bind to RNA via its Arg/Ser-rich domain. In Homo sapiens (Human), this protein is Putative RNA-binding protein Luc7-like 1 (LUC7L).